A 754-amino-acid chain; its full sequence is Zinc finger protein with KRAB and SCAN domains 7 (754 aa).

A Glycyl lysine isopeptide (Lys-Gly) (interchain with G-Cter in SUMO2) cross-link involves residue Lys-28. The region spanning 54-136 (RLHFRQLCYH…AVVEDFQRHL (83 aa)) is the SCAN box domain. The disordered stretch occupies residues 157-215 (TALGTTKESPPTSPLSGGSAPGAHLEPPYDPGTHHLPSGDFAQCTSPVPTLPQVGNSGD). Polar residues-rich tracts occupy residues 158–172 (ALGT…SPLS) and 199–215 (QCTS…NSGD). Residues 231 to 306 (VAYEDLSVDY…TSGGLFGVVP (76 aa)) enclose the KRAB domain. 10 C2H2-type zinc fingers span residues 383–405 (YRCD…QRIH), 411–433 (YECN…LRTH), 439–461 (YECS…QRLH), 467–489 (YKCN…QRTH), 495–517 (YECN…QVLH), 523–545 (YKCN…QRIH), 551–573 (YECS…QSLH), 579–601 (YKCS…ERIH), 607–629 (FECS…QRLH), and 635–657 (YKCN…QRIH). Residues 663-685 (YECNECGKVFSYSSSLMVHQRTH) form a C2H2-type 11; degenerate zinc finger. 2 C2H2-type zinc fingers span residues 691–713 (YKCN…QRVH) and 719–741 (YECS…QRTH). A disordered region spans residues 735–754 (NHHQRTHTGEKSSGLAWSVS).

The protein belongs to the krueppel C2H2-type zinc-finger protein family.

The protein localises to the nucleus. Its function is as follows. May be involved in transcriptional regulation. The sequence is that of Zinc finger protein with KRAB and SCAN domains 7 (ZKSCAN7) from Homo sapiens (Human).